The primary structure comprises 351 residues: MKNKKLLVMAGGTGGHVFPAIAVAQTLQKQEWDICWLGTKDRMEAQLVPKYGIPIRFIQISGLRGKGIKALLNAPFAIFRAVLQAKKIIQEEKPDAVLGMGGYVSGPAGVAAKLCGVPIILHEQNAIAGLTNKLLGKIATCVLQAFPTAFPHAEVVGNPVREDLFEMPNPDIRFSDREEKLRVLVVGGSQGARVLNHTLPKVVAQLADKLELRHQVGKGAVEEVSQLYGENLEQVKITEFIDNMAEAYAWADVVICRSGALTVCEIAAVGVAAIFVPFQHKDRQQYLNAKYLSDVDAAKIIEQADLTPEMLVNYLKNLTRENLLQMALKAKTMSMPNAAQRVAEVIKQYSN.

UDP-N-acetyl-alpha-D-glucosamine-binding positions include 13-15 (TGG), Asn125, Arg161, Ser189, Ile241, 260-265 (ALTVCE), and Gln285.

The protein belongs to the glycosyltransferase 28 family. MurG subfamily.

It is found in the cell inner membrane. The catalysed reaction is di-trans,octa-cis-undecaprenyl diphospho-N-acetyl-alpha-D-muramoyl-L-alanyl-D-glutamyl-meso-2,6-diaminopimeloyl-D-alanyl-D-alanine + UDP-N-acetyl-alpha-D-glucosamine = di-trans,octa-cis-undecaprenyl diphospho-[N-acetyl-alpha-D-glucosaminyl-(1-&gt;4)]-N-acetyl-alpha-D-muramoyl-L-alanyl-D-glutamyl-meso-2,6-diaminopimeloyl-D-alanyl-D-alanine + UDP + H(+). It functions in the pathway cell wall biogenesis; peptidoglycan biosynthesis. Cell wall formation. Catalyzes the transfer of a GlcNAc subunit on undecaprenyl-pyrophosphoryl-MurNAc-pentapeptide (lipid intermediate I) to form undecaprenyl-pyrophosphoryl-MurNAc-(pentapeptide)GlcNAc (lipid intermediate II). The chain is UDP-N-acetylglucosamine--N-acetylmuramyl-(pentapeptide) pyrophosphoryl-undecaprenol N-acetylglucosamine transferase from Haemophilus influenzae (strain 86-028NP).